A 157-amino-acid chain; its full sequence is MIVLGIDPALGNLGWALVAKEYTKLKYLASGTIKTHSKDEIHNRLAFINSTLEKVILKYQPNIAAIEETFINTNSVTSLKLGYARGAIMSLIGRYNLNMQEFKPNTVKKTVTGYGHAKKEQILYMIKHLIPGTDLITNSDEADAVALAYTSLVTKKY.

Active-site residues include D7, E67, and D140. The Mg(2+) site is built by D7, E67, and D140.

Belongs to the RuvC family. In terms of assembly, homodimer which binds Holliday junction (HJ) DNA. The HJ becomes 2-fold symmetrical on binding to RuvC with unstacked arms; it has a different conformation from HJ DNA in complex with RuvA. In the full resolvosome a probable DNA-RuvA(4)-RuvB(12)-RuvC(2) complex forms which resolves the HJ. Mg(2+) is required as a cofactor.

It is found in the cytoplasm. The enzyme catalyses Endonucleolytic cleavage at a junction such as a reciprocal single-stranded crossover between two homologous DNA duplexes (Holliday junction).. In terms of biological role, the RuvA-RuvB-RuvC complex processes Holliday junction (HJ) DNA during genetic recombination and DNA repair. Endonuclease that resolves HJ intermediates. Cleaves cruciform DNA by making single-stranded nicks across the HJ at symmetrical positions within the homologous arms, yielding a 5'-phosphate and a 3'-hydroxyl group; requires a central core of homology in the junction. The consensus cleavage sequence is 5'-(A/T)TT(C/G)-3'. Cleavage occurs on the 3'-side of the TT dinucleotide at the point of strand exchange. HJ branch migration catalyzed by RuvA-RuvB allows RuvC to scan DNA until it finds its consensus sequence, where it cleaves and resolves the cruciform DNA. In Rickettsia typhi (strain ATCC VR-144 / Wilmington), this protein is Crossover junction endodeoxyribonuclease RuvC.